The chain runs to 196 residues: Large ribosomal subunit protein uL5 (196 aa).

The protein belongs to the universal ribosomal protein uL5 family. Part of the 50S ribosomal subunit; part of the 5S rRNA/L5/L18/L25 subcomplex. Contacts the 5S rRNA and the P site tRNA. Forms a bridge to the 30S subunit in the 70S ribosome.

This is one of the proteins that bind and probably mediate the attachment of the 5S RNA into the large ribosomal subunit, where it forms part of the central protuberance. In the 70S ribosome it contacts protein S13 of the 30S subunit (bridge B1b), connecting the 2 subunits; this bridge is implicated in subunit movement. Contacts the P site tRNA; the 5S rRNA and some of its associated proteins might help stabilize positioning of ribosome-bound tRNAs. The chain is Large ribosomal subunit protein uL5 from Rhodopirellula baltica (strain DSM 10527 / NCIMB 13988 / SH1).